The sequence spans 377 residues: Nitric oxide reductase FlRd-NAD(+) reductase (377 aa).

It belongs to the FAD-dependent oxidoreductase family. The cofactor is FAD.

The protein resides in the cytoplasm. The catalysed reaction is 2 reduced [nitric oxide reductase rubredoxin domain] + NAD(+) + H(+) = 2 oxidized [nitric oxide reductase rubredoxin domain] + NADH. It participates in nitrogen metabolism; nitric oxide reduction. In terms of biological role, one of at least two accessory proteins for anaerobic nitric oxide (NO) reductase. Reduces the rubredoxin moiety of NO reductase. The polypeptide is Nitric oxide reductase FlRd-NAD(+) reductase (Salmonella newport (strain SL254)).